A 309-amino-acid chain; its full sequence is Protoheme IX farnesyltransferase (309 aa).

9 consecutive transmembrane segments (helical) span residues 35–55, 64–84, 114–134, 135–155, 161–181, 187–207, 231–251, 253–273, and 289–309; these read IGIVNSNLITTFAGMWLAFYF, LHLVFFTLFGAALVIAGSCAI, VLWLGIGLVAIGEMGLLMTTV, TAAVVGLIGMATYVFLYTLWT, INTVVGSISGAVPPVIGWTAV, IVPLILFLIMFLWQPPHFLAL, MTKRQIIVWVACLLPLPFYLF, LGVPFLIVATLLNVGWLLLGL, and FVYSLNYLTILFVAMIIATLW.

This sequence belongs to the UbiA prenyltransferase family. Protoheme IX farnesyltransferase subfamily. As to quaternary structure, interacts with CtaA.

It is found in the cell membrane. The enzyme catalyses heme b + (2E,6E)-farnesyl diphosphate + H2O = Fe(II)-heme o + diphosphate. It functions in the pathway porphyrin-containing compound metabolism; heme O biosynthesis; heme O from protoheme: step 1/1. In terms of biological role, converts heme B (protoheme IX) to heme O by substitution of the vinyl group on carbon 2 of heme B porphyrin ring with a hydroxyethyl farnesyl side group. The sequence is that of Protoheme IX farnesyltransferase from Geobacillus kaustophilus (strain HTA426).